Reading from the N-terminus, the 343-residue chain is Dipeptide transport system permease protein DppC (343 aa).

Transmembrane regions (helical) follow at residues 44-64 (LVAMWIIAITLVFSVISAFVV), 144-164 (LIIALAAALIDLVIGVTYGII), 195-215 (LALLLGQGISSIIIAIGLFAW), 259-279 (GVIVVQIMFDIPSMIMYEAVL), and 309-329 (FQLIIPAIVLSVLSLTFIFFG). The ABC transmembrane type-1 domain maps to 140 to 329 (LRISLIIALA…VLSLTFIFFG (190 aa)).

Belongs to the binding-protein-dependent transport system permease family. OppBC subfamily. In terms of assembly, the complex is composed of two ATP-binding proteins (DppD and DppF), two transmembrane proteins (DppB and DppC) and a solute-binding protein (DppA).

The protein localises to the cell membrane. In terms of biological role, part of the ABC transporter DppABCDF involved in dipeptide transport. Responsible for the translocation of the substrate across the membrane. This Lactococcus lactis subsp. cremoris (strain MG1363) protein is Dipeptide transport system permease protein DppC.